A 147-amino-acid polypeptide reads, in one-letter code: UPF0178 protein Tgr7_2584 (147 aa).

Belongs to the UPF0178 family.

This chain is UPF0178 protein Tgr7_2584, found in Thioalkalivibrio sulfidiphilus (strain HL-EbGR7).